A 358-amino-acid chain; its full sequence is Transcription factor bHLH67 (358 aa).

Residues 125 to 176 (NMTLPSSTSSPLSAHSRRKRKINHLLPQEMTREKRKRRKTKPSKNNEEIENQ) are disordered. Residues 127–137 (TLPSSTSSPLS) show a composition bias toward low complexity. The segment covering 157-166 (EKRKRRKTKP) has biased composition (basic residues). One can recognise a bHLH domain in the interval 175 to 226 (NQRINHIAVERNRRRQMNEHINSLRALLPPSYIQRGDQASIVGGAINYVKVL).

In terms of assembly, homodimer. In terms of tissue distribution, expressed constitutively in roots, leaves, stems, and flowers.

The protein localises to the nucleus. The polypeptide is Transcription factor bHLH67 (BHLH67) (Arabidopsis thaliana (Mouse-ear cress)).